A 225-amino-acid polypeptide reads, in one-letter code: PKHD-type hydroxylase Smal_0990 (225 aa).

The Fe2OG dioxygenase domain occupies 78–177 (KYLPPRFNRY…RVASFFWVQS (100 aa)). The Fe cation site is built by histidine 96, aspartate 98, and histidine 158. Arginine 168 provides a ligand contact to 2-oxoglutarate.

Fe(2+) is required as a cofactor. It depends on L-ascorbate as a cofactor.

The chain is PKHD-type hydroxylase Smal_0990 from Stenotrophomonas maltophilia (strain R551-3).